The following is a 361-amino-acid chain: UDP-3-O-acylglucosamine N-acyltransferase (361 aa).

His253 functions as the Proton acceptor in the catalytic mechanism.

Belongs to the transferase hexapeptide repeat family. LpxD subfamily. Homotrimer.

The catalysed reaction is a UDP-3-O-[(3R)-3-hydroxyacyl]-alpha-D-glucosamine + a (3R)-hydroxyacyl-[ACP] = a UDP-2-N,3-O-bis[(3R)-3-hydroxyacyl]-alpha-D-glucosamine + holo-[ACP] + H(+). It functions in the pathway bacterial outer membrane biogenesis; LPS lipid A biosynthesis. Its function is as follows. Catalyzes the N-acylation of UDP-3-O-acylglucosamine using 3-hydroxyacyl-ACP as the acyl donor. Is involved in the biosynthesis of lipid A, a phosphorylated glycolipid that anchors the lipopolysaccharide to the outer membrane of the cell. The sequence is that of UDP-3-O-acylglucosamine N-acyltransferase from Burkholderia pseudomallei (strain 1710b).